A 228-amino-acid chain; its full sequence is Ion-translocating oxidoreductase complex subunit E (228 aa).

The next 5 helical transmembrane spans lie at 24 to 44, 73 to 93, 95 to 115, 130 to 150, and 184 to 204; these read LLGL…LGLG, VFVL…NAFF, ELYL…AIIG, LADG…LGAL, and GFLL…LIAL.

Belongs to the NqrDE/RnfAE family. The complex is composed of six subunits: RnfA, RnfB, RnfC, RnfD, RnfE and RnfG.

Its subcellular location is the cell inner membrane. Functionally, part of a membrane-bound complex that couples electron transfer with translocation of ions across the membrane. The sequence is that of Ion-translocating oxidoreductase complex subunit E from Thioalkalivibrio sulfidiphilus (strain HL-EbGR7).